A 220-amino-acid chain; its full sequence is Botcinic acid biosynthesis cluster B protein 12 (220 aa).

It participates in polyketide biosynthesis. Its function is as follows. Part of the gene cluster B that mediates the biosynthesis of botcinic acid and its botcinin derivatives, acetate-derived polyketides that contribute to virulence when combined with the sesquiterpene botrydial. Botcinic acid and its derivatives have been shown to induce chlorosis and necrosis during host plant infection, but also have antifungal activities. Two polyketide synthases, BOA6 and BOA9, are involved in the biosynthesis of botcinins. BOA6 mediates the formation of the per-methylated tetraketide core by condensation of four units of malonyl-CoA with one unit of acetyl-CoA, which would be methylated in activated methylene groups to yield a bicyclic acid intermediate that could then either be converted to botrylactone derivatives or lose the starter acetate unit through a retro-Claisen type C-C bond cleavage to yield botcinin derivatives. The second polyketide synthase, BOA9, is probably required for the biosynthesis of the tetraketide side chain of botcinins. The methyltransferase (MT) domain within BOA6 is probably responsible for the incorporation of four methyl groups. The trans-enoyl reductase BOA5 might take over the enoyl reductase function of BOA6 that misses an ER domain. The monooxygenases BOA2, BOA3 and BOA4 might be involved in further hydroxylations at C4, C5 and C8, whereas BOA7, close to BOA9, could potentially be involved in the hydroxylation at C4 in the side chain of botcinins. This is Botcinic acid biosynthesis cluster B protein 12 from Botryotinia fuckeliana (strain B05.10) (Noble rot fungus).